The chain runs to 297 residues: Probable DNA polymerase III subunit delta (297 aa).

It belongs to the DNA polymerase HolA subunit family. In terms of assembly, component of the DNA clamp loading complex consisting of tau(3):delta(1):delta'(1). The DNA polymerase III holoenzyme complex contains at least 10 different subunits organized into 3 functionally essential subassemblies: the Pol III core, the beta sliding clamp processivity factor and the clamp-loading complex. The Pol III core (subunits alpha, epsilon and theta) contains the polymerase and the 3'-5' exonuclease proofreading activities. The polymerase is tethered to the template via the dimeric beta sliding clamp processivity factor. The DNA clamp-loading complex assembles the beta sliding clamp onto the primed template and plays a central role in the organization and communication at the replication fork.

It catalyses the reaction DNA(n) + a 2'-deoxyribonucleoside 5'-triphosphate = DNA(n+1) + diphosphate. In terms of biological role, part of the beta sliding clamp loading complex, which hydrolyzes ATP to load the beta clamp onto primed DNA to form the DNA replication pre-initiation complex. DNA polymerase III is a complex, multichain enzyme responsible for most of the replicative synthesis in bacteria. This DNA polymerase also exhibits 3'-5' exonuclease activity. The delta subunit is the wrench that will open the beta subunit dimer. The DNA clamp loading complex (tau(3),delta,delta') is thought to load beta dimers onto DNA by binding ATP which alters the complex's conformation so it can bind beta sliding clamp dimers and open them at one interface. Primed DNA is recognized, ATP is hydrolyzed releasing the clamp loading complex and closing the beta sliding clamp ring around the primed DNA. This is Probable DNA polymerase III subunit delta from Mycoplasma genitalium (strain ATCC 33530 / DSM 19775 / NCTC 10195 / G37) (Mycoplasmoides genitalium).